Reading from the N-terminus, the 334-residue chain is 6-phosphogluconolactonase (334 aa).

It belongs to the cycloisomerase 2 family.

It catalyses the reaction 6-phospho-D-glucono-1,5-lactone + H2O = 6-phospho-D-gluconate + H(+). It functions in the pathway carbohydrate degradation; pentose phosphate pathway; D-ribulose 5-phosphate from D-glucose 6-phosphate (oxidative stage): step 2/3. Functionally, catalyzes the hydrolysis of 6-phosphogluconolactone to 6-phosphogluconate. This is 6-phosphogluconolactonase from Yersinia pseudotuberculosis serotype IB (strain PB1/+).